The chain runs to 624 residues: Phosphoenolpyruvate carboxykinase (ATP) 1 (624 aa).

A disordered region spans residues 1-22 (MASPNGGVTTYDYDDSDSAAPV). 322–329 (GLSGTGKT) is a binding site for ATP.

This sequence belongs to the phosphoenolpyruvate carboxykinase (ATP) family. In terms of assembly, homohexamer. Green leaves but not in roots or etiolated shoots.

The protein localises to the cytoplasm. It carries out the reaction oxaloacetate + ATP = phosphoenolpyruvate + ADP + CO2. It participates in carbohydrate biosynthesis; gluconeogenesis. This chain is Phosphoenolpyruvate carboxykinase (ATP) 1 (PCK1), found in Urochloa panicoides (Panic liverseed grass).